The following is a 510-amino-acid chain: Citrate lyase alpha chain (510 aa).

In terms of assembly, oligomer with a subunit composition of (alpha,beta,gamma)6.

Its subcellular location is the cytoplasm. It carries out the reaction citrate = oxaloacetate + acetate. The enzyme catalyses citrate + acetyl-CoA = (3S)-citryl-CoA + acetate. In terms of biological role, represents a citrate:acetyl-ACP transferase. In Escherichia coli (strain K12), this protein is Citrate lyase alpha chain (citF).